The chain runs to 543 residues: CTP synthase (543 aa).

The amidoligase domain stretch occupies residues 1–266 (MKTNYIFVTG…DDYICERFSL (266 aa)). Position 14 (Ser14) interacts with CTP. Ser14 contacts UTP. Residues 15–20 (SLGKGI) and Asp72 contribute to the ATP site. Asp72 and Glu140 together coordinate Mg(2+). Residues 147 to 149 (DIE), 187 to 192 (KTKPTQ), and Lys223 each bind CTP. UTP-binding positions include 187 to 192 (KTKPTQ) and Lys223. 239-241 (KDV) serves as a coordination point for ATP. A Glutamine amidotransferase type-1 domain is found at 291–538 (TVGIVGKYID…IKAASEYQKK (248 aa)). Gly352 contributes to the L-glutamine binding site. The Nucleophile; for glutamine hydrolysis role is filled by Cys379. L-glutamine-binding positions include 380 to 383 (LGMQ), Glu403, and Arg466. Active-site residues include His511 and Glu513.

It belongs to the CTP synthase family. Homotetramer.

The catalysed reaction is UTP + L-glutamine + ATP + H2O = CTP + L-glutamate + ADP + phosphate + 2 H(+). It catalyses the reaction L-glutamine + H2O = L-glutamate + NH4(+). The enzyme catalyses UTP + NH4(+) + ATP = CTP + ADP + phosphate + 2 H(+). The protein operates within pyrimidine metabolism; CTP biosynthesis via de novo pathway; CTP from UDP: step 2/2. With respect to regulation, allosterically activated by GTP, when glutamine is the substrate; GTP has no effect on the reaction when ammonia is the substrate. The allosteric effector GTP functions by stabilizing the protein conformation that binds the tetrahedral intermediate(s) formed during glutamine hydrolysis. Inhibited by the product CTP, via allosteric rather than competitive inhibition. Catalyzes the ATP-dependent amination of UTP to CTP with either L-glutamine or ammonia as the source of nitrogen. Regulates intracellular CTP levels through interactions with the four ribonucleotide triphosphates. The chain is CTP synthase from Baumannia cicadellinicola subsp. Homalodisca coagulata.